The primary structure comprises 361 residues: Aurora kinase B-A (361 aa).

Residues phenylalanine 93 to valine 343 form the Protein kinase domain. ATP is bound by residues leucine 99–valine 107 and lysine 122. Aspartate 216 serves as the catalytic Proton acceptor.

This sequence belongs to the protein kinase superfamily. Ser/Thr protein kinase family. Aurora subfamily. Component of the CPC at least composed of survivin/birc5, incenp, cdca8/borealin and/or cdca9/dasra-A, and aurkb/aurora-B. Interacts directly (via N-terminus and kinase domain) with incenp (via C terminus), and may weakly interact (via N-terminus) with birc5.1 to stabilize the complex. Interacts with mtus1. The cofactor is Mg(2+). In terms of processing, phosphorylated, stimulates kinase activity.

It localises to the nucleus. The protein localises to the chromosome. The enzyme catalyses L-seryl-[protein] + ATP = O-phospho-L-seryl-[protein] + ADP + H(+). It catalyses the reaction L-threonyl-[protein] + ATP = O-phospho-L-threonyl-[protein] + ADP + H(+). Kinase activity is stimulated by both birc5/survivin-binding and cell-cycle specific phosphorylation. Serine/threonine-protein kinase component of the chromosomal passenger complex (CPC), a complex that acts as a key regulator of mitosis. The CPC complex has essential functions at the centromere in ensuring correct chromosome alignment and segregation and is required for chromatin-induced microtubule stabilization and spindle assembly. Involved in the bipolar attachment of spindle microtubules to kinetochores and is a key regulator for the onset of cytokinesis during mitosis. Required for central/midzone spindle assembly and cleavage furrow formation. Key component of the cytokinesis checkpoint, a process required to delay abscission to prevent both premature resolution of intercellular chromosome bridges and accumulation of DNA damage. Phosphorylates 'Ser-10' of histone H3 during mitosis. This is Aurora kinase B-A (aurkb-a) from Xenopus laevis (African clawed frog).